A 518-amino-acid chain; its full sequence is 4-trimethylaminobutyraldehyde dehydrogenase B (518 aa).

Residues K204 and 256 to 260 (GSVPT) each bind NAD(+). E278 acts as the Proton acceptor in catalysis. The active-site Nucleophile is C312. E415 provides a ligand contact to NAD(+).

This sequence belongs to the aldehyde dehydrogenase family. As to quaternary structure, homotetramer.

It is found in the cytoplasm. The protein resides in the cytosol. It catalyses the reaction 4-(trimethylamino)butanal + NAD(+) + H2O = 4-(trimethylamino)butanoate + NADH + 2 H(+). It carries out the reaction an aldehyde + NAD(+) + H2O = a carboxylate + NADH + 2 H(+). The protein operates within amine and polyamine biosynthesis; carnitine biosynthesis. In terms of biological role, converts gamma-trimethylaminobutyraldehyde into gamma-butyrobetaine with high efficiency (in vitro). Can catalyze the irreversible oxidation of a broad range of aldehydes to the corresponding acids in an NAD-dependent reaction, but with low efficiency. This chain is 4-trimethylaminobutyraldehyde dehydrogenase B (aldh9a1b), found in Danio rerio (Zebrafish).